A 670-amino-acid polypeptide reads, in one-letter code: Transcription factor vib-1 (670 aa).

The segment at residues 106–341 (TEMVQDLRDD…RSPRNFQARK (236 aa)) is a DNA-binding region (NDT80). Composition is skewed to polar residues over residues 394-438 (FTSA…TTSM) and 553-568 (LGNSSSDISPQSQHHP). Disordered stretches follow at residues 394 to 457 (FTSA…SYTA) and 496 to 670 (SAPP…WNAT). Positions 592–605 (ASAPASAPTSAAPP) are enriched in low complexity. Polar residues predominate over residues 611 to 631 (PSQSWTSTAGEGQTSSYTNGG).

The protein localises to the nucleus. The protein resides in the cytoplasm. In terms of biological role, transcription factor that acts as a positive regulator of nonrepressible acid phosphatase activity. Is a major regulator of responses to nitrogen and carbon starvation and is essential for the expression of genes involved in vegetative incompatibility (like pin-c, het-6, and tol). Vegetative incompatibility is a non-self-recognition system ubiquitous in filamentous fungi which results in programmed cell death. In Neurospora crassa (strain ATCC 24698 / 74-OR23-1A / CBS 708.71 / DSM 1257 / FGSC 987), this protein is Transcription factor vib-1 (vib-1).